The sequence spans 165 residues: Fibrinogen-binding protein (165 aa).

The signal sequence occupies residues 1–29 (MKNKLIAKSLLTLAAIGITTTTIASTADA).

Interacts with host fibrinogen alpha chain/FGA. Interacts with host complement protein C3.

The protein localises to the secreted. Its function is as follows. Extracellular fibrinogen-binding protein that plays an important role in virulence. By interacting with the alpha chain of fibrinogen and its derivative fibrin, enhances a non-functional interaction between fibrinogen and platelets and is responsible for repression of fibrinogen-dependent platelet aggregation. In addition, assembles a fibrinogen protective shield around the bacteria which results in impaired phagocytic clearance by the host. Mechanistically, interacts with host complement C3b deposited on the surface of the bacterium via its C-terminal and then recruits fibrinogen via its N-terminal. The chain is Fibrinogen-binding protein (fib) from Staphylococcus aureus (strain Newman).